The sequence spans 250 residues: N-acyl homoserine lactonase (250 aa).

Positions 104, 106, 108, 109, 169, 191, and 235 each coordinate Zn(2+).

Belongs to the metallo-beta-lactamase superfamily. Monomer. Zn(2+) serves as cofactor.

The enzyme catalyses an N-acyl-L-homoserine lactone + H2O = an N-acyl-L-homoserine + H(+). The chain is N-acyl homoserine lactonase from Bacillus cereus.